Consider the following 224-residue polypeptide: Orotate phosphoribosyltransferase (224 aa).

5-phospho-alpha-D-ribose 1-diphosphate is bound by residues K26, 73–74 (YK), R100, K101, K104, H106, and 127–135 (EDVTTSGKS). 2 residues coordinate orotate: T131 and R160.

This sequence belongs to the purine/pyrimidine phosphoribosyltransferase family. PyrE subfamily. Homodimer. Mg(2+) is required as a cofactor.

It catalyses the reaction orotidine 5'-phosphate + diphosphate = orotate + 5-phospho-alpha-D-ribose 1-diphosphate. The protein operates within pyrimidine metabolism; UMP biosynthesis via de novo pathway; UMP from orotate: step 1/2. Its function is as follows. Catalyzes the transfer of a ribosyl phosphate group from 5-phosphoribose 1-diphosphate to orotate, leading to the formation of orotidine monophosphate (OMP). The protein is Orotate phosphoribosyltransferase of Clostridium botulinum (strain Eklund 17B / Type B).